A 153-amino-acid polypeptide reads, in one-letter code: UPF0102 protein Pnap_0271 (153 aa).

It belongs to the UPF0102 family.

The protein is UPF0102 protein Pnap_0271 of Polaromonas naphthalenivorans (strain CJ2).